The following is a 154-amino-acid chain: Ribonuclease H (154 aa).

The 142-residue stretch at 3 to 144 (ELPVVSIFTD…ADQLARDGVA (142 aa)) folds into the RNase H type-1 domain. Mg(2+) is bound by residues Asp12, Glu50, Asp72, and Asp136.

It belongs to the RNase H family. In terms of assembly, monomer. Mg(2+) serves as cofactor.

The protein resides in the cytoplasm. It catalyses the reaction Endonucleolytic cleavage to 5'-phosphomonoester.. Functionally, endonuclease that specifically degrades the RNA of RNA-DNA hybrids. This chain is Ribonuclease H, found in Bradyrhizobium sp. (strain ORS 278).